Reading from the N-terminus, the 128-residue chain is Organic solute transporter subunit beta (128 aa).

Over 1–30 (MDHSAEKAAANAEVPQELLEEMLWYFRAED) the chain is Extracellular. A helical membrane pass occupies residues 31–53 (AAPWNYSILVLAVLVVMTSMFLL). The Cytoplasmic segment spans residues 54-128 (RRSILANRNR…FLPDPQETES (75 aa)). Disordered regions lie at residues 61-80 (RNRK…HLDD) and 101-128 (PDLA…ETES). Basic and acidic residues-rich tracts occupy residues 66–80 (QPQD…HLDD) and 101–115 (PDLA…EKDS). Phosphoserine is present on Ser116.

This sequence belongs to the OST-beta family. Interacts with SLC51A. The Ost-alpha/Ost-beta complex is a heterodimer composed of alpha (SLC51A) and beta (SLC51B) subunit; induces the transport of SLC51A from the endoplasmic reticulum to the plasma membrane. As to expression, present at high level in ileum. In ileum, it is restricted to the apical domain on the mature villus enterocytes with little detectable expression in the goblet cells or crypt enterocytes (at protein level). Expressed in kidney but not in heart, brain, liver, spleen, embryo, lung, thymus, ovary nor testis.

It localises to the cell membrane. It catalyses the reaction taurocholate(out) = taurocholate(in). The enzyme catalyses tauroursodeoxycholate(out) = tauroursodeoxycholate(in). It carries out the reaction glycoursodeoxycholate(out) = glycoursodeoxycholate(in). The catalysed reaction is glycocholate(out) = glycocholate(in). It catalyses the reaction taurochenodeoxycholate(out) = taurochenodeoxycholate(in). The enzyme catalyses glycochenodeoxycholate(out) = glycochenodeoxycholate(in). It carries out the reaction taurodeoxycholate(out) = taurodeoxycholate(in). The catalysed reaction is glycodeoxycholate(out) = glycodeoxycholate(in). It catalyses the reaction prostaglandin E2(out) = prostaglandin E2(in). The enzyme catalyses estrone 3-sulfate(out) = estrone 3-sulfate(in). It carries out the reaction dehydroepiandrosterone 3-sulfate(out) = dehydroepiandrosterone 3-sulfate(in). In terms of biological role, essential component of the Ost-alpha/Ost-beta complex, a heterodimer that acts as the intestinal basolateral transporter responsible for bile acid export from enterocytes into portal blood. The Ost-alpha/Ost-beta complex efficiently transports the major species of bile acids (taurocholate). Taurine conjugates are transported more efficiently across the basolateral membrane than glycine-conjugated bile acids. Can also transport steroids such as estrone 3-sulfate and dehydroepiandrosterone 3-sulfate, therefore playing a role in the enterohepatic circulation of sterols. Able to transport eicosanoids such as prostaglandin E2. Modulates SLC51A glycosylation, membrane trafficking and stability activities. The polypeptide is Organic solute transporter subunit beta (Slc51b) (Mus musculus (Mouse)).